Consider the following 461-residue polypeptide: D-phenylhydantoinase (461 aa).

Residues histidine 59, histidine 61, and lysine 151 each coordinate a divalent metal cation. N6-carboxylysine is present on lysine 151. Tyrosine 156 is a substrate binding site. 2 residues coordinate a divalent metal cation: histidine 182 and histidine 239. Serine 286 is a substrate binding site. Aspartate 313 serves as a coordination point for a divalent metal cation. Asparagine 335 contributes to the substrate binding site.

This sequence belongs to the metallo-dependent hydrolases superfamily. Hydantoinase/dihydropyrimidinase family. Homotetramer. A divalent metal cation serves as cofactor. In terms of processing, carboxylation allows a single lysine to coordinate two divalent metal cations.

It carries out the reaction D-5-phenylhydantoin + H2O = N-carbamoyl-D-phenylglycine + H(+). Its function is as follows. Catalyzes the stereospecific hydrolysis of the cyclic amide bond of D-hydantoin derivatives with an aromatic side chains at the 5'-position. Has no activity on dihydropyrimidines. The physiological function is unknown. The polypeptide is D-phenylhydantoinase (Shigella boydii serotype 4 (strain Sb227)).